We begin with the raw amino-acid sequence, 158 residues long: pH 6 antigen (158 aa).

The N-terminal stretch at 1 to 26 (MKMKCFAKNALAVTTLMIAACGMANA) is a signal peptide.

As to quaternary structure, forms a homomer composed of subunits assembled in a large structure.

It localises to the fimbrium. Functionally, fibrillar structure, part of fimbriae, necessary for full virulence. This Yersinia pestis protein is pH 6 antigen (psaA).